A 346-amino-acid chain; its full sequence is Beta-ketoacyl-[acyl-carrier-protein] synthase III (346 aa).

Catalysis depends on residues Cys-120 and His-256. The segment at 257-261 (QANIR) is ACP-binding. Residue Asn-286 is part of the active site.

It belongs to the thiolase-like superfamily. FabH family. In terms of assembly, homodimer.

It is found in the cytoplasm. It catalyses the reaction malonyl-[ACP] + acetyl-CoA + H(+) = 3-oxobutanoyl-[ACP] + CO2 + CoA. Its pathway is lipid metabolism; fatty acid biosynthesis. Its function is as follows. Catalyzes the condensation reaction of fatty acid synthesis by the addition to an acyl acceptor of two carbons from malonyl-ACP. Catalyzes the first condensation reaction which initiates fatty acid synthesis and may therefore play a role in governing the total rate of fatty acid production. Possesses both acetoacetyl-ACP synthase and acetyl transacylase activities. Its substrate specificity determines the biosynthesis of branched-chain and/or straight-chain of fatty acids. The chain is Beta-ketoacyl-[acyl-carrier-protein] synthase III from Deinococcus geothermalis (strain DSM 11300 / CIP 105573 / AG-3a).